Consider the following 584-residue polypeptide: UBX domain-containing protein 2 (584 aa).

Topologically, residues 1–80 are cytoplasmic; that stretch reads MPVVNHEDSE…PTQTSTPMAE (80 aa). The helical transmembrane segment at 81 to 101 threads the bilayer; it reads TLVPPALGPRPLLFTASLPVV. Topologically, residues 102 to 151 are lumenal; sequence RPLPANFRNDFRTIGLNGRSNTVWSMFESFSYDGNPFLFILLLIPRIINR. The helical transmembrane segment at 152 to 172 threads the bilayer; the sequence is LSATIFTFFCTLLSLHSISGG. Over 173-584 the chain is Cytoplasmic; sequence GNSGKPKISK…DEEDEENEEQ (412 aa). Residues 426–570 form the UBX domain; that stretch reads ETTGKQATLQ…WPNGSLLVEA (145 aa).

In terms of assembly, component of the DOA10 ubiquitin ligase complex which contains E3 ligase SSM4/DOA10 and CDC48-binding protein UBX2/SEL1. Component of the HRD1 ubiquitin ligase complex which contains the E3 ligase HRD1, its cofactors HRD3, USA1 and DER1, substrate recruiting factor YOS9 and UBX2. In ERAD-L, HRD3 and YOS9 jointly bind misfolded glycoproteins in the endoplasmic reticulum (ER) lumen. Movement of ERAD-L substrates through the ER membrane is facilitated by HRD1 and DER1 which have lateral gates facing each other and which distort the membrane region between the lateral gates, making it much thinner than a normal phospholipid bilayer. Substrates insert into the membrane as a hairpin loop with one strand interacting with DER1 and the other with HRD1. Both the DOA10 and HRD1 ubiquitin ligase complexes interact with the heterotrimeric CDC48-NPL4-UFD1 ATPase complex which is recruited by UBX2 via its interaction with CDC48 and which moves ubiquitinated substrates to the cytosol for targeting to the proteasome.

The protein localises to the endoplasmic reticulum membrane. In terms of biological role, integral endoplasmic reticulum membrane protein that coordinates the assembly of the ER-associated protein degradation (ERAD) machinery at the ER membrane. Mediates binding of CDC48 to the E3 ubiquitin ligases SSM4/DOA10 and HRD1, and to ERAD substrates. Component of the DOA10 ubiquitin ligase complex, which is part of the ERAD-C pathway responsible for the rapid degradation of membrane proteins with misfolded cytoplasmic domains. ERAD-C substrates are ubiquitinated through DOA10 in conjunction with the E2 ubiquitin-conjugating enzymes UBC6 and UBC7-CUE1. Also a component of the HRD1 ubiquitin ligase complex, which is part of the ERAD-L and ERAD-M pathways responsible for the rapid degradation of soluble lumenal and membrane proteins with misfolded lumenal domains (ERAD-L), or ER-membrane proteins with misfolded transmembrane domains (ERAD-M). ERAD-L substrates are ubiquitinated through HRD1 in conjunction with the E2 ubiquitin-conjugating enzymes UBC1 and UBC7-CUE1. Ubiquitinated substrates are then removed to the cytosol via the action of the CDC48-NPL4-UFD1 ATPase complex and targeted to the proteasome. This chain is UBX domain-containing protein 2 (UBX2), found in Saccharomyces cerevisiae (strain ATCC 204508 / S288c) (Baker's yeast).